A 250-amino-acid polypeptide reads, in one-letter code: uncharacterized protein (250 aa).

The helical transmembrane segment at 4 to 24 (FKYLLFLVVFAVFFLTFAFFD) threads the bilayer.

It localises to the membrane. This is an uncharacterized protein from Methanocaldococcus jannaschii (strain ATCC 43067 / DSM 2661 / JAL-1 / JCM 10045 / NBRC 100440) (Methanococcus jannaschii).